The sequence spans 253 residues: Probable transcriptional regulatory protein Synpcc7942_1017 (253 aa).

This sequence belongs to the TACO1 family.

The protein resides in the cytoplasm. This is Probable transcriptional regulatory protein Synpcc7942_1017 from Synechococcus elongatus (strain ATCC 33912 / PCC 7942 / FACHB-805) (Anacystis nidulans R2).